The primary structure comprises 128 residues: Large ribosomal subunit protein bL12 (128 aa).

Belongs to the bacterial ribosomal protein bL12 family. As to quaternary structure, homodimer. Part of the ribosomal stalk of the 50S ribosomal subunit. Forms a multimeric L10(L12)X complex, where L10 forms an elongated spine to which 2 to 4 L12 dimers bind in a sequential fashion. Binds GTP-bound translation factors.

Its function is as follows. Forms part of the ribosomal stalk which helps the ribosome interact with GTP-bound translation factors. Is thus essential for accurate translation. This Trichormus variabilis (strain ATCC 29413 / PCC 7937) (Anabaena variabilis) protein is Large ribosomal subunit protein bL12.